Here is a 122-residue protein sequence, read N- to C-terminus: MVLQPFKFQNQKKFCRKANPTGRISHDFIYSHIQIFTVRILFTKVNLIDLRLLNTVAFKNGFLHFVQFRDRFVNRIIIHFTLQKGSSLIINRFVSCIRVFVVYCHRKAYQYENEEIQRKRCI.

This is an uncharacterized protein from Saccharomyces cerevisiae (strain ATCC 204508 / S288c) (Baker's yeast).